The primary structure comprises 57 residues: Small hydrophobic protein (57 aa).

The Virion surface segment spans residues 1–8 (MPAIQPPL). Residues 9 to 29 (YPTFLLLILLSLIITLYAWII) form a helical membrane-spanning segment. At 30-57 (STITYKTAMRHAALYQRSFFRWSFDHSL) the chain is on the intravirion side.

It belongs to the rubulavirus small hydrophobic protein family. In terms of assembly, interacts with host TNFRSF1A, RIPK1 and IRAK1; these interactions interfere with host NF-kappa-B activation at the level of receptor complexes. Interacts with host protein UBQLN4.

The protein resides in the virion membrane. Its subcellular location is the host cell membrane. Plays a role in the inhibition of the host NF-kappa-B pathway. This inhibition occurs at the receptor level, by preventing the signaling of TNFR1 as well as IL-1R and TLR3. This Homo sapiens (Human) protein is Small hydrophobic protein (SH).